A 257-amino-acid polypeptide reads, in one-letter code: Phosphonates import ATP-binding protein PhnC 1 (257 aa).

An ABC transporter domain is found at 2–246 (IELKNVSKVY…VFKDIYGRPL (245 aa)). 35 to 42 (GLSGAGKS) serves as a coordination point for ATP.

This sequence belongs to the ABC transporter superfamily. Phosphonates importer (TC 3.A.1.9.1) family. As to quaternary structure, the complex is composed of two ATP-binding proteins (PhnC), two transmembrane proteins (PhnE) and a solute-binding protein (PhnD).

Its subcellular location is the cell membrane. It catalyses the reaction phosphonate(out) + ATP + H2O = phosphonate(in) + ADP + phosphate + H(+). Functionally, part of the ABC transporter complex PhnCDE involved in phosphonates import. Responsible for energy coupling to the transport system. The protein is Phosphonates import ATP-binding protein PhnC 1 of Halalkalibacterium halodurans (strain ATCC BAA-125 / DSM 18197 / FERM 7344 / JCM 9153 / C-125) (Bacillus halodurans).